We begin with the raw amino-acid sequence, 66 residues long: Large ribosomal subunit protein bL33 (66 aa).

Belongs to the bacterial ribosomal protein bL33 family.

The protein is Large ribosomal subunit protein bL33 of Synechococcus sp. (strain CC9311).